The primary structure comprises 439 residues: MPTVNVIGAGLAGSEAAWQIAQAGVDVNLYEMRPVKMTPAHHTSNFAELVCTNSLRANQITNAVGLLKEEMRQLHSIIIQSADATAVPAGGALAVDREPFSELVTQKLTSNSHIHVVNEELSAFPDGITVVATGPLTAPGLAQAIVDLNGEAGLSFFDAAAPILDANTINEDIVYKKSRYDRGEAAYLNCPMTKDEFLAFYQALVSAEVAEGHDFEKMTVFEGCMPIEVMAKRGIKTMLFGPLKPVGLEDPRTGKEPYAVVQLRQDNAAASLYNMVGFQTHLKWGEQKRVFRLIPGLENVQIVRYGVMHRNTFMKSPVVLEPTYASKRRPDLFFAGQMTGVEGYVESAASGLIAGINATRMALGETPVIFPETTAMGSMAHYITHTSAHHFQPMNANFGIMPALTVKIRNKKERNQQLADRALKDLATFQAGMNRVEQV.

An FAD-binding site is contributed by 8-13; it reads GAGLAG.

It belongs to the MnmG family. TrmFO subfamily. FAD is required as a cofactor.

The protein localises to the cytoplasm. The enzyme catalyses uridine(54) in tRNA + (6R)-5,10-methylene-5,6,7,8-tetrahydrofolate + NADH + H(+) = 5-methyluridine(54) in tRNA + (6S)-5,6,7,8-tetrahydrofolate + NAD(+). It catalyses the reaction uridine(54) in tRNA + (6R)-5,10-methylene-5,6,7,8-tetrahydrofolate + NADPH + H(+) = 5-methyluridine(54) in tRNA + (6S)-5,6,7,8-tetrahydrofolate + NADP(+). Functionally, catalyzes the folate-dependent formation of 5-methyl-uridine at position 54 (M-5-U54) in all tRNAs. This is Methylenetetrahydrofolate--tRNA-(uracil-5-)-methyltransferase TrmFO from Lacticaseibacillus paracasei (strain ATCC 334 / BCRC 17002 / CCUG 31169 / CIP 107868 / KCTC 3260 / NRRL B-441) (Lactobacillus paracasei).